Here is a 177-residue protein sequence, read N- to C-terminus: Isopentenyl-diphosphate Delta-isomerase (177 aa).

His-22 and His-28 together coordinate Mn(2+). The Nudix hydrolase domain maps to 26–160 (LRHMAISVFV…PERFTPWLRI (135 aa)). The active site involves Cys-62. Mn(2+) is bound at residue His-64. Residue Glu-82 participates in Mg(2+) binding. Glu-108 and Glu-110 together coordinate Mn(2+). Residue Glu-110 is part of the active site.

This sequence belongs to the IPP isomerase type 1 family. Requires Mg(2+) as cofactor. It depends on Mn(2+) as a cofactor.

It is found in the cytoplasm. It catalyses the reaction isopentenyl diphosphate = dimethylallyl diphosphate. Its pathway is isoprenoid biosynthesis; dimethylallyl diphosphate biosynthesis; dimethylallyl diphosphate from isopentenyl diphosphate: step 1/1. The protein operates within porphyrin-containing compound metabolism; chlorophyll biosynthesis. Its function is as follows. Catalyzes the 1,3-allylic rearrangement of the homoallylic substrate isopentenyl (IPP) to its highly electrophilic allylic isomer, dimethylallyl diphosphate (DMAPP). This is Isopentenyl-diphosphate Delta-isomerase from Cereibacter sphaeroides (strain KD131 / KCTC 12085) (Rhodobacter sphaeroides).